The chain runs to 365 residues: BTB/POZ and TAZ domain-containing protein 1 (365 aa).

In terms of domain architecture, BTB spans 25-96; the sequence is TDVEIITSGR…LYSPSVTENE (72 aa). The Nuclear localization signal motif lies at 193-202; the sequence is RKKRRRRHRR. The TAZ-type zinc finger occupies 205 to 304; that stretch reads NLYLQLSEAM…SESCRVPLCR (100 aa). The segment at 315 to 338 is caM-binding; that stretch reads KMVEDTKWKVLVRRVASAKAMSSL.

As to quaternary structure, interacts with CUL3A. Interacts with GTE9/BET9 and GTE11/BET10 through the BTB domain. As to expression, preferentially expressed in young leaves, roots and stems.

The protein localises to the nucleus. The protein resides in the cytoplasm. Its pathway is protein modification; protein ubiquitination. Functionally, may act as a substrate-specific adapter of an E3 ubiquitin-protein ligase complex (CUL3-RBX1-BTB) which mediates the ubiquitination and subsequent proteasomal degradation of target proteins. Also targeted for degradation by the 26S proteasome pathway. May be involved in gametophyte development. The protein is BTB/POZ and TAZ domain-containing protein 1 (BT1) of Arabidopsis thaliana (Mouse-ear cress).